The primary structure comprises 268 residues: Tryptophan synthase alpha chain (268 aa).

Residues Glu-49 and Asp-60 each act as proton acceptor in the active site.

The protein belongs to the TrpA family. As to quaternary structure, tetramer of two alpha and two beta chains.

The enzyme catalyses (1S,2R)-1-C-(indol-3-yl)glycerol 3-phosphate + L-serine = D-glyceraldehyde 3-phosphate + L-tryptophan + H2O. It participates in amino-acid biosynthesis; L-tryptophan biosynthesis; L-tryptophan from chorismate: step 5/5. Its function is as follows. The alpha subunit is responsible for the aldol cleavage of indoleglycerol phosphate to indole and glyceraldehyde 3-phosphate. In Serratia proteamaculans (strain 568), this protein is Tryptophan synthase alpha chain.